A 274-amino-acid chain; its full sequence is 4-diphosphocytidyl-2-C-methyl-D-erythritol kinase (274 aa).

K8 is an active-site residue. 92–102 is an ATP binding site; sequence PSGAGLGGGSS. D134 is a catalytic residue.

Belongs to the GHMP kinase family. IspE subfamily.

The enzyme catalyses 4-CDP-2-C-methyl-D-erythritol + ATP = 4-CDP-2-C-methyl-D-erythritol 2-phosphate + ADP + H(+). Its pathway is isoprenoid biosynthesis; isopentenyl diphosphate biosynthesis via DXP pathway; isopentenyl diphosphate from 1-deoxy-D-xylulose 5-phosphate: step 3/6. Catalyzes the phosphorylation of the position 2 hydroxy group of 4-diphosphocytidyl-2C-methyl-D-erythritol. This is 4-diphosphocytidyl-2-C-methyl-D-erythritol kinase from Porphyromonas gingivalis (strain ATCC 33277 / DSM 20709 / CIP 103683 / JCM 12257 / NCTC 11834 / 2561).